A 298-amino-acid polypeptide reads, in one-letter code: Probable phosphite transport system-binding protein HtxB (298 aa).

Residues 1-33 (MQVFTLFSKFKKALTRAILAFIATIIVCTPAQA) form the signal peptide.

Belongs to the phosphate/phosphite/phosphonate binding protein family.

In terms of biological role, probably forms part of a binding-protein-dependent hypophosphite transporter. This chain is Probable phosphite transport system-binding protein HtxB (htxB), found in Stutzerimonas stutzeri (Pseudomonas stutzeri).